The following is a 1894-amino-acid chain: Fibronectin type III domain-containing protein 1 (1894 aa).

Positions 1–32 (MAPEAGATLRAPRRLSWAALLLLAALLPVASS) are cleaved as a signal peptide. A Fibronectin type-III 1 domain is found at 39-131 (HPLKPRHVKL…PVYRAESPPG (93 aa)). The N-linked (GlcNAc...) asparagine glycan is linked to Asn-149. 3 Fibronectin type-III domains span residues 158–258 (PNKP…SEED), 262–357 (VPDD…TPES), and 362–457 (APEN…MPTT). Disordered regions lie at residues 455–500 (PTTS…PQGR), 515–1271 (ANGG…TVSP), 1311–1350 (LSRQPARPSYRQGYNGRPNVEGKVLPGSNGKPNGQRIING), and 1444–1515 (THPP…CPPG). Over residues 565 to 574 (TLRPPSRHGH) the composition is skewed to basic residues. Residues 614 to 625 (PSASASPAHHAS) show a composition bias toward low complexity. A compositionally biased stretch (polar residues) spans 626–641 (TQGTSHRPSLPASLND). Low complexity-rich tracts occupy residues 711-722 (SASAPPSRLSPP) and 759-778 (SRSTMSSSVSSHLSSRTQVS). Phosphoserine is present on Ser-717. Positions 786 to 799 (GESHGDGDREDGGR) are enriched in basic and acidic residues. Composition is skewed to polar residues over residues 941 to 957 (KYSSLASKAQDVQQSTD) and 1027 to 1060 (SPSQPRLSLTQAGRPRPTSQGRSHSSSDPYTASS). Over residues 1071–1088 (QDEDAQGSYDDDSTEVEA) the composition is skewed to acidic residues. Residues 1166 to 1176 (PLSSKSQQSVS) are compositionally biased toward polar residues. Residues 1197–1209 (SSSVPKWPSSSTP) are compositionally biased toward low complexity. The span at 1211 to 1226 (GGKDADGSLAKEEREP) shows a compositional bias: basic and acidic residues. A compositionally biased stretch (low complexity) spans 1445–1504 (HPPTTTMQPTTTTTPLPTTTTPRPTTATTRRTTTTRRTTTRRPTTTVRTTTRTTTTTTPT). A Fibronectin type-III 5 domain is found at 1658–1752 (APRNITVVAV…PSVSFVTESD (95 aa)). Asn-1661 carries N-linked (GlcNAc...) asparagine glycosylation.

As to expression, almost absent from healthy skin; especially in epidermal keratinocytes, skin fibroblasts or endothelial cells and is barely detectable in benign melanocytic naevi. Expressed in the stroma close to skin tumors, in the tumor cells themselves and in the epidermis of psoriasis.

Its subcellular location is the secreted. May be an activator of G protein signaling. The chain is Fibronectin type III domain-containing protein 1 (FNDC1) from Homo sapiens (Human).